Consider the following 199-residue polypeptide: Stress response protein SCP2 (199 aa).

This sequence belongs to the CAPAB/TerDEXZ family.

It is found in the cytoplasm. The protein is Stress response protein SCP2 (yceC) of Bacillus subtilis (strain 168).